The following is a 118-amino-acid chain: Small ribosomal subunit protein uS13 (118 aa).

The disordered stretch occupies residues 94 to 118 (SLPLRGQRTKTNARTRKGPRKPIRK).

It belongs to the universal ribosomal protein uS13 family. As to quaternary structure, part of the 30S ribosomal subunit. Forms a loose heterodimer with protein S19. Forms two bridges to the 50S subunit in the 70S ribosome.

Functionally, located at the top of the head of the 30S subunit, it contacts several helices of the 16S rRNA. In the 70S ribosome it contacts the 23S rRNA (bridge B1a) and protein L5 of the 50S subunit (bridge B1b), connecting the 2 subunits; these bridges are implicated in subunit movement. Contacts the tRNAs in the A and P-sites. The protein is Small ribosomal subunit protein uS13 of Shewanella denitrificans (strain OS217 / ATCC BAA-1090 / DSM 15013).